Consider the following 227-residue polypeptide: tRNA (guanine-N(7)-)-methyltransferase (227 aa).

4 residues coordinate S-adenosyl-L-methionine: Glu60, Glu85, Asp112, and Asp135. The active site involves Asp135. Residues Lys139, Asp171, and 206–209 (TKFE) each bind substrate.

It belongs to the class I-like SAM-binding methyltransferase superfamily. TrmB family.

The enzyme catalyses guanosine(46) in tRNA + S-adenosyl-L-methionine = N(7)-methylguanosine(46) in tRNA + S-adenosyl-L-homocysteine. It functions in the pathway tRNA modification; N(7)-methylguanine-tRNA biosynthesis. Its function is as follows. Catalyzes the formation of N(7)-methylguanine at position 46 (m7G46) in tRNA. The chain is tRNA (guanine-N(7)-)-methyltransferase from Thiobacillus denitrificans (strain ATCC 25259 / T1).